The following is a 241-amino-acid chain: Small ribosomal subunit protein uS2c (241 aa).

It belongs to the universal ribosomal protein uS2 family.

The protein localises to the plastid. It is found in the chloroplast. The polypeptide is Small ribosomal subunit protein uS2c (rps2) (Porphyra purpurea (Red seaweed)).